Reading from the N-terminus, the 599-residue chain is Elongation factor 4 (599 aa).

Positions 5–187 (SHIRNFSIIA…RLVTAIPAPE (183 aa)) constitute a tr-type G domain. GTP-binding positions include 17–22 (DHGKST) and 134–137 (NKMD).

Belongs to the TRAFAC class translation factor GTPase superfamily. Classic translation factor GTPase family. LepA subfamily.

The protein resides in the cell inner membrane. It catalyses the reaction GTP + H2O = GDP + phosphate + H(+). Its function is as follows. Required for accurate and efficient protein synthesis under certain stress conditions. May act as a fidelity factor of the translation reaction, by catalyzing a one-codon backward translocation of tRNAs on improperly translocated ribosomes. Back-translocation proceeds from a post-translocation (POST) complex to a pre-translocation (PRE) complex, thus giving elongation factor G a second chance to translocate the tRNAs correctly. Binds to ribosomes in a GTP-dependent manner. The protein is Elongation factor 4 of Pseudomonas aeruginosa (strain LESB58).